The primary structure comprises 427 residues: 3-phosphoshikimate 1-carboxyvinyltransferase (427 aa).

3 residues coordinate 3-phosphoshikimate: lysine 22, serine 23, and arginine 27. Residue lysine 22 participates in phosphoenolpyruvate binding. Phosphoenolpyruvate-binding residues include glycine 96 and arginine 124. Positions 169, 170, 171, 197, 313, 336, and 340 each coordinate 3-phosphoshikimate. Glutamine 171 is a binding site for phosphoenolpyruvate. Residue aspartate 313 is the Proton acceptor of the active site. Arginine 344, arginine 386, and lysine 411 together coordinate phosphoenolpyruvate.

It belongs to the EPSP synthase family. In terms of assembly, monomer.

It is found in the cytoplasm. It catalyses the reaction 3-phosphoshikimate + phosphoenolpyruvate = 5-O-(1-carboxyvinyl)-3-phosphoshikimate + phosphate. It participates in metabolic intermediate biosynthesis; chorismate biosynthesis; chorismate from D-erythrose 4-phosphate and phosphoenolpyruvate: step 6/7. In terms of biological role, catalyzes the transfer of the enolpyruvyl moiety of phosphoenolpyruvate (PEP) to the 5-hydroxyl of shikimate-3-phosphate (S3P) to produce enolpyruvyl shikimate-3-phosphate and inorganic phosphate. The protein is 3-phosphoshikimate 1-carboxyvinyltransferase of Salmonella typhi.